The chain runs to 209 residues: Large ribosomal subunit protein uL3 (209 aa).

Residues 128-152 (QARGPMSHGSRYHRRPGSMGPVDPN) are disordered.

The protein belongs to the universal ribosomal protein uL3 family. In terms of assembly, part of the 50S ribosomal subunit. Forms a cluster with proteins L14 and L19.

In terms of biological role, one of the primary rRNA binding proteins, it binds directly near the 3'-end of the 23S rRNA, where it nucleates assembly of the 50S subunit. In Halalkalibacterium halodurans (strain ATCC BAA-125 / DSM 18197 / FERM 7344 / JCM 9153 / C-125) (Bacillus halodurans), this protein is Large ribosomal subunit protein uL3.